A 428-amino-acid polypeptide reads, in one-letter code: 3-phosphoshikimate 1-carboxyvinyltransferase (428 aa).

Residues Lys-22, Ser-23, and Arg-27 each coordinate 3-phosphoshikimate. A phosphoenolpyruvate-binding site is contributed by Lys-22. The phosphoenolpyruvate site is built by Gly-96 and Arg-124. 7 residues coordinate 3-phosphoshikimate: Ser-170, Ser-171, Gln-172, Ser-198, Asp-314, Asn-337, and Lys-341. A phosphoenolpyruvate-binding site is contributed by Gln-172. Asp-314 (proton acceptor) is an active-site residue. Residues Arg-345, Arg-387, and Lys-412 each contribute to the phosphoenolpyruvate site.

Belongs to the EPSP synthase family. Monomer.

It is found in the cytoplasm. The enzyme catalyses 3-phosphoshikimate + phosphoenolpyruvate = 5-O-(1-carboxyvinyl)-3-phosphoshikimate + phosphate. Its pathway is metabolic intermediate biosynthesis; chorismate biosynthesis; chorismate from D-erythrose 4-phosphate and phosphoenolpyruvate: step 6/7. Functionally, catalyzes the transfer of the enolpyruvyl moiety of phosphoenolpyruvate (PEP) to the 5-hydroxyl of shikimate-3-phosphate (S3P) to produce enolpyruvyl shikimate-3-phosphate and inorganic phosphate. This chain is 3-phosphoshikimate 1-carboxyvinyltransferase, found in Shewanella denitrificans (strain OS217 / ATCC BAA-1090 / DSM 15013).